We begin with the raw amino-acid sequence, 512 residues long: uncharacterized protein (512 aa).

The next 12 helical transmembrane spans lie at 25-45, 55-75, 96-116, 123-143, 148-168, 183-203, 238-258, 263-283, 294-314, 329-349, 359-379, and 386-406; these read GFYT…VICA, LLYP…PLIL, LVVC…VFLA, VVTG…LPAV, LLLT…LVIV, LLWL…FVGP, MTTY…SLRA, GSLH…SMLW, GLLL…MVAE, FLLA…WISV, LICV…VALG, and ATIW…VASL. The tract at residues 428-512 is disordered; it reads YRPATPNPIH…APLDAGQRIA (85 aa).

It localises to the cell membrane. This is an uncharacterized protein from Mycobacterium tuberculosis (strain CDC 1551 / Oshkosh).